The chain runs to 191 residues: Adenylate kinase (191 aa).

Residue 10-15 coordinates ATP; the sequence is GAGKGT. Residues 30–59 form an NMP region; it reads STGDMLRAARTSGTEMGNLVAGVMDRGELV. AMP is bound by residues T31, R36, 57–59, 83–86, and Q90; these read ELV and GFPR. An LID region spans residues 124–140; the sequence is NRAKEAAAAGQPVRADD. Residue R125 coordinates ATP. Positions 137 and 148 each coordinate AMP. An ATP-binding site is contributed by G176.

The protein belongs to the adenylate kinase family. Monomer.

It localises to the cytoplasm. The catalysed reaction is AMP + ATP = 2 ADP. It functions in the pathway purine metabolism; AMP biosynthesis via salvage pathway; AMP from ADP: step 1/1. Catalyzes the reversible transfer of the terminal phosphate group between ATP and AMP. Plays an important role in cellular energy homeostasis and in adenine nucleotide metabolism. The sequence is that of Adenylate kinase from Jannaschia sp. (strain CCS1).